The chain runs to 163 residues: Putative 4-hydroxy-4-methyl-2-oxoglutarate aldolase (163 aa).

Substrate contacts are provided by residues 76–79 (GDML) and arginine 98. Aspartate 99 lines the a divalent metal cation pocket.

It belongs to the class II aldolase/RraA-like family. In terms of assembly, homotrimer. A divalent metal cation serves as cofactor.

It catalyses the reaction 4-hydroxy-4-methyl-2-oxoglutarate = 2 pyruvate. It carries out the reaction oxaloacetate + H(+) = pyruvate + CO2. Its function is as follows. Catalyzes the aldol cleavage of 4-hydroxy-4-methyl-2-oxoglutarate (HMG) into 2 molecules of pyruvate. Also contains a secondary oxaloacetate (OAA) decarboxylase activity due to the common pyruvate enolate transition state formed following C-C bond cleavage in the retro-aldol and decarboxylation reactions. The polypeptide is Putative 4-hydroxy-4-methyl-2-oxoglutarate aldolase (Pseudomonas entomophila (strain L48)).